Reading from the N-terminus, the 76-residue chain is Demidefensin-3 (76 aa).

An N-terminal signal peptide occupies residues 1–22; it reads MRTLALHTAMLLLVALHAQAEA. A propeptide spanning residues 23 to 64 is cleaved from the precursor; that stretch reads RQARADEAAAQQQPGADDQGMAHSFTWPENAALPLSESERGL. Residues 25 to 45 form a disordered region; it reads ARADEAAAQQQPGADDQGMAH. The span at 30 to 44 shows a compositional bias: low complexity; that stretch reads AAAQQQPGADDQGMA. An intrachain disulfide couples cysteine 68 to cysteine 73. The propeptide occupies 74–76; that stretch reads RLL.

The protein belongs to the alpha-defensin family. Theta subfamily. In terms of assembly, forms a cyclic homodimer; disulfide-linked. This is a cyclic peptide.

Has antimicrobial activities against bacteria and fungi. This chain is Demidefensin-3, found in Macaca mulatta (Rhesus macaque).